A 101-amino-acid polypeptide reads, in one-letter code: MMFELVLFLSVYLFSIGIYGLITSRNMVRALICLELILNSINLNLVTFSDLFDSRQLKGDIFAIFVIALAAAEAAIGLSILSSIHRNRKSTRINQSNLLNN.

3 consecutive transmembrane segments (helical) span residues 2–22, 32–52, and 61–81; these read MFEL…YGLI, ICLE…SDLF, and IFAI…LSIL.

Belongs to the complex I subunit 4L family. NDH is composed of at least 16 different subunits, 5 of which are encoded in the nucleus.

The protein localises to the plastid. It is found in the chloroplast thylakoid membrane. It catalyses the reaction a plastoquinone + NADH + (n+1) H(+)(in) = a plastoquinol + NAD(+) + n H(+)(out). The enzyme catalyses a plastoquinone + NADPH + (n+1) H(+)(in) = a plastoquinol + NADP(+) + n H(+)(out). In terms of biological role, NDH shuttles electrons from NAD(P)H:plastoquinone, via FMN and iron-sulfur (Fe-S) centers, to quinones in the photosynthetic chain and possibly in a chloroplast respiratory chain. The immediate electron acceptor for the enzyme in this species is believed to be plastoquinone. Couples the redox reaction to proton translocation, and thus conserves the redox energy in a proton gradient. In Lolium perenne (Perennial ryegrass), this protein is NAD(P)H-quinone oxidoreductase subunit 4L, chloroplastic.